We begin with the raw amino-acid sequence, 237 residues long: Uridylate kinase (237 aa).

12-15 (KLSG) provides a ligand contact to ATP. Residues 20–25 (GEDGLG) form an involved in allosteric activation by GTP region. Residue glycine 54 coordinates UMP. ATP-binding residues include glycine 55 and arginine 59. UMP contacts are provided by residues aspartate 74 and 135 to 142 (TGNPFFTT). Positions 162, 168, and 171 each coordinate ATP.

This sequence belongs to the UMP kinase family. Homohexamer.

Its subcellular location is the cytoplasm. It carries out the reaction UMP + ATP = UDP + ADP. It functions in the pathway pyrimidine metabolism; CTP biosynthesis via de novo pathway; UDP from UMP (UMPK route): step 1/1. Its activity is regulated as follows. Allosterically activated by GTP. Inhibited by UTP. Catalyzes the reversible phosphorylation of UMP to UDP. The sequence is that of Uridylate kinase from Haemophilus influenzae (strain 86-028NP).